The following is a 150-amino-acid chain: uncharacterized protein (150 aa).

The protein to A.tumefaciens conjugal transfer protein TraB.

This is an uncharacterized protein from Agrobacterium tumefaciens (strain 15955).